Here is a 99-residue protein sequence, read N- to C-terminus: Co-chaperonin GroES (99 aa).

It belongs to the GroES chaperonin family. Heptamer of 7 subunits arranged in a ring. Interacts with the chaperonin GroEL.

The protein resides in the cytoplasm. Its function is as follows. Together with the chaperonin GroEL, plays an essential role in assisting protein folding. The GroEL-GroES system forms a nano-cage that allows encapsulation of the non-native substrate proteins and provides a physical environment optimized to promote and accelerate protein folding. GroES binds to the apical surface of the GroEL ring, thereby capping the opening of the GroEL channel. This is Co-chaperonin GroES from Rhodococcus erythropolis (strain PR4 / NBRC 100887).